Here is a 92-residue protein sequence, read N- to C-terminus: YcgL domain-containing protein Sama_1929 (92 aa).

The 85-residue stretch at 1–85 folds into the YcgL domain; sequence MICAVYKSSR…PKDNLLTQHR (85 aa).

The sequence is that of YcgL domain-containing protein Sama_1929 from Shewanella amazonensis (strain ATCC BAA-1098 / SB2B).